A 152-amino-acid polypeptide reads, in one-letter code: Phospholipase A2 pkP2 (152 aa).

The N-terminal stretch at 1–21 (MNPAHLLVLLAVCVSLLGASA) is a signal peptide. A propeptide spanning residues 22–27 (IPPLPL) is cleaved from the precursor. 7 disulfides stabilise this stretch: cysteine 38–cysteine 104, cysteine 54–cysteine 151, cysteine 56–cysteine 72, cysteine 71–cysteine 132, cysteine 78–cysteine 125, cysteine 88–cysteine 118, and cysteine 111–cysteine 123. Ca(2+) is bound by residues tyrosine 55, glycine 57, and glycine 59. Residue histidine 75 is part of the active site. Aspartate 76 provides a ligand contact to Ca(2+). Residue aspartate 126 is part of the active site.

It belongs to the phospholipase A2 family. Group I subfamily. Requires Ca(2+) as cofactor.

The protein localises to the secreted. It carries out the reaction a 1,2-diacyl-sn-glycero-3-phosphocholine + H2O = a 1-acyl-sn-glycero-3-phosphocholine + a fatty acid + H(+). In terms of biological role, PA2 catalyzes the calcium-dependent hydrolysis of the 2-acyl groups in 3-sn-phosphoglycerides. This chain is Phospholipase A2 pkP2, found in Laticauda semifasciata (Black-banded sea krait).